Consider the following 78-residue polypeptide: D-alanyl carrier protein (78 aa).

The Carrier domain occupies M1 to R78. O-(pantetheine 4'-phosphoryl)serine is present on S36.

The protein belongs to the DltC family. In terms of processing, 4'-phosphopantetheine is transferred from CoA to a specific serine of apo-DCP.

The protein resides in the cytoplasm. The protein operates within cell wall biogenesis; lipoteichoic acid biosynthesis. In terms of biological role, carrier protein involved in the D-alanylation of lipoteichoic acid (LTA). The loading of thioester-linked D-alanine onto DltC is catalyzed by D-alanine--D-alanyl carrier protein ligase DltA. The DltC-carried D-alanyl group is further transferred to cell membrane phosphatidylglycerol (PG) by forming an ester bond, probably catalyzed by DltD. D-alanylation of LTA plays an important role in modulating the properties of the cell wall in Gram-positive bacteria, influencing the net charge of the cell wall. In Bacillus licheniformis (strain ATCC 14580 / DSM 13 / JCM 2505 / CCUG 7422 / NBRC 12200 / NCIMB 9375 / NCTC 10341 / NRRL NRS-1264 / Gibson 46), this protein is D-alanyl carrier protein.